The sequence spans 92 residues: Small ribosomal subunit protein uS19c (92 aa).

It belongs to the universal ribosomal protein uS19 family.

The protein resides in the plastid. It is found in the chloroplast. Protein S19 forms a complex with S13 that binds strongly to the 16S ribosomal RNA. The protein is Small ribosomal subunit protein uS19c of Nicotiana sylvestris (Wood tobacco).